A 364-amino-acid chain; its full sequence is Histidinol-phosphate aminotransferase (364 aa).

The tract at residues 1–46 is disordered; it reads MQPRDLSDHSPYVPGRGVEEVARDRGLDPDDLIKLSSNENPHGPSP. Positions 17-33 are enriched in basic and acidic residues; it reads GVEEVARDRGLDPDDLI. Position 222 is an N6-(pyridoxal phosphate)lysine (Lys222).

The protein belongs to the class-II pyridoxal-phosphate-dependent aminotransferase family. Histidinol-phosphate aminotransferase subfamily. Requires pyridoxal 5'-phosphate as cofactor.

It carries out the reaction L-histidinol phosphate + 2-oxoglutarate = 3-(imidazol-4-yl)-2-oxopropyl phosphate + L-glutamate. Its pathway is amino-acid biosynthesis; L-histidine biosynthesis; L-histidine from 5-phospho-alpha-D-ribose 1-diphosphate: step 7/9. The protein is Histidinol-phosphate aminotransferase of Halorubrum lacusprofundi (strain ATCC 49239 / DSM 5036 / JCM 8891 / ACAM 34).